Reading from the N-terminus, the 361-residue chain is MATAASNPYSILSSSSLVHADSAGMQQGSPFRNPQKLLQSDYLQGVPSNGHPLGHHWVTSLSDGGPWSSTLATSPLDQPDVKPGREDLQLGAIIHHRSPHVAHHSPHTNHPNAWGASPAPNSSITNSGQPLNVYSQPGFTVSGMLEHGGLTPPPAAASTQSLHPVLREPPDHGELGSHHCQDHSDEETPTSDELEQFAKQFKQRRIKLGFTQADVGLALGTLYGNVFSQTTICRFEALQLSFKNMCKLKPLLNKWLEEADSSTGSPTSIDKIAAQGRKRKKRTSIEVSVKGVLETHFLKCPKPAAQEISSLADSLQLEKEVVRVWFCNRRQKEKRMTPPGDQQPHEVYSHTVKTDASCHDL.

2 disordered regions span residues 99 to 131 and 144 to 192; these read PHVA…GQPL and MLEH…PTSD. Polar residues predominate over residues 119 to 131; the sequence is APNSSITNSGQPL. Residues 165–183 show a composition bias toward basic and acidic residues; the sequence is VLREPPDHGELGSHHCQDH. The POU-specific domain occupies 186 to 260; it reads EETPTSDELE…LLNKWLEEAD (75 aa). Position 265 is a phosphoserine (serine 265). The segment at residues 278 to 337 is a DNA-binding region (homeobox); that stretch reads KRKKRTSIEVSVKGVLETHFLKCPKPAAQEISSLADSLQLEKEVVRVWFCNRRQKEKRMT. Residues 334-361 form a disordered region; that stretch reads KRMTPPGDQQPHEVYSHTVKTDASCHDL. The span at 343–361 shows a compositional bias: basic and acidic residues; that stretch reads QPHEVYSHTVKTDASCHDL.

This sequence belongs to the POU transcription factor family. Class-3 subfamily.

The protein localises to the nucleus. Functionally, probable transcription factor which exert its primary action widely during early neural development and in a very limited set of neurons in the mature brain. This chain is POU domain, class 3, transcription factor 4 (Pou3f4), found in Mesocricetus auratus (Golden hamster).